Consider the following 78-residue polypeptide: U-scoloptoxin(04)-Er1b (78 aa).

An N-terminal signal peptide occupies residues 1-24 (MTRHLIFAAVLLVCLFVCWNAVGA). Residues 25-28 (QDAR) constitute a propeptide that is removed on maturation.

This sequence belongs to the scoloptoxin-04 family. Post-translationally, contains 2 disulfide bonds. In terms of tissue distribution, expressed by the venom gland.

Its subcellular location is the secreted. The chain is U-scoloptoxin(04)-Er1b from Ethmostigmus rubripes (Giant centipede).